The chain runs to 243 residues: Probable intron-encoded endonuclease aI3 (243 aa).

Belongs to the LAGLIDADG endonuclease family.

Its subcellular location is the mitochondrion. In terms of biological role, mitochondrial DNA endonuclease involved in intron homing. The polypeptide is Probable intron-encoded endonuclease aI3 (aI3) (Dictyostelium citrinum (Slime mold)).